The following is a 209-amino-acid chain: uncharacterized protein (209 aa).

Positions 1–19 are cleaved as a signal peptide; that stretch reads MGYFPYLAVFVCLLASGDA. Asparagine 41 and asparagine 109 each carry an N-linked (GlcNAc...) asparagine glycan.

Component of the acid-soluble organic matrix of prismatic shell layers (at protein level).

Its subcellular location is the secreted. This is an uncharacterized protein from Haliotis asinina (Donkey's ear abalone).